A 177-amino-acid chain; its full sequence is Large ribosomal subunit protein uL6 (177 aa).

This sequence belongs to the universal ribosomal protein uL6 family. As to quaternary structure, part of the 50S ribosomal subunit.

Its function is as follows. This protein binds to the 23S rRNA, and is important in its secondary structure. It is located near the subunit interface in the base of the L7/L12 stalk, and near the tRNA binding site of the peptidyltransferase center. The sequence is that of Large ribosomal subunit protein uL6 from Histophilus somni (strain 129Pt) (Haemophilus somnus).